Consider the following 132-residue polypeptide: Arsenate reductase 1 (132 aa).

Active-site nucleophile residues include C10, C82, and C89. 2 disulfide bridges follow: C10–C82 and C82–C89.

This sequence belongs to the low molecular weight phosphotyrosine protein phosphatase family. Thioredoxin-coupled ArsC subfamily.

It is found in the cytoplasm. The catalysed reaction is arsenate + [thioredoxin]-dithiol + H(+) = arsenite + [thioredoxin]-disulfide + H2O. In terms of biological role, catalyzes the reduction of arsenate [As(V)] to arsenite [As(III)]. The polypeptide is Arsenate reductase 1 (Staphylococcus epidermidis (strain ATCC 35984 / DSM 28319 / BCRC 17069 / CCUG 31568 / BM 3577 / RP62A)).